The following is a 216-amino-acid chain: Large ribosomal subunit protein uL4 (216 aa).

The interval 47–77 is disordered; the sequence is THKVKGMGEVSGTTKKPYRQKGTGNARQGSL.

The protein belongs to the universal ribosomal protein uL4 family. In terms of assembly, part of the 50S ribosomal subunit.

Its function is as follows. One of the primary rRNA binding proteins, this protein initially binds near the 5'-end of the 23S rRNA. It is important during the early stages of 50S assembly. It makes multiple contacts with different domains of the 23S rRNA in the assembled 50S subunit and ribosome. Functionally, forms part of the polypeptide exit tunnel. The sequence is that of Large ribosomal subunit protein uL4 from Acidiphilium cryptum (strain JF-5).